Reading from the N-terminus, the 89-residue chain is Small ribosomal subunit protein bS20 (89 aa).

The segment at 1-26 is disordered; it reads MANSPQAKKRARQNEKNRKHNASLRS. Residues 7–22 are compositionally biased toward basic residues; it reads AKKRARQNEKNRKHNA.

Belongs to the bacterial ribosomal protein bS20 family.

Its function is as follows. Binds directly to 16S ribosomal RNA. In Marinobacter nauticus (strain ATCC 700491 / DSM 11845 / VT8) (Marinobacter aquaeolei), this protein is Small ribosomal subunit protein bS20.